The sequence spans 421 residues: Mannose-1-phosphate guanylyltransferase regulatory subunit alpha (421 aa).

The substrate-binding domain stretch occupies residues 2 to 252 (LKAVILIGGP…EGCWSQIKSA (251 aa)). GDP-alpha-D-mannose-binding residues include Glu85 and Gln248. The segment at 274-421 (LASTKEGGPT…SRSFKNQIIL (148 aa)) is hexapeptide repeat domain. Residues 357–385 (TPSDPNPNDPYSKIDSETLFREGKLTPSI) form a C-loop region.

Belongs to the transferase hexapeptide repeat family. Component of the GMPPA-GMPPB mannose-1-phosphate guanylyltransferase complex composed of 4 gmppa subunits and 8 gmppb subunits; the complex is organized into three layers, a central layer made up of 2 gmppa dimers sandwiched between two layers each made up of 2 gmppb dimers.

The protein resides in the cytoplasm. Regulatory subunit of the GMPPA-GMPPB mannose-1-phosphate guanylyltransferase complex; reduces the catalytic activity of GMPPB when part of the complex. Mediates allosteric feedback inhibition of GMPPB catalytic activity upon binding GDP-alpha-D-mannose. Together with GMPPB regulates GDP-alpha-D-mannose levels. This Xenopus tropicalis (Western clawed frog) protein is Mannose-1-phosphate guanylyltransferase regulatory subunit alpha (gmppa).